The chain runs to 444 residues: Proline--tRNA ligase (444 aa).

The protein belongs to the class-II aminoacyl-tRNA synthetase family. ProS type 2 subfamily. Homodimer.

The protein resides in the cytoplasm. The enzyme catalyses tRNA(Pro) + L-proline + ATP = L-prolyl-tRNA(Pro) + AMP + diphosphate. Functionally, catalyzes the attachment of proline to tRNA(Pro) in a two-step reaction: proline is first activated by ATP to form Pro-AMP and then transferred to the acceptor end of tRNA(Pro). The polypeptide is Proline--tRNA ligase (Pelagibacter ubique (strain HTCC1062)).